A 260-amino-acid polypeptide reads, in one-letter code: HTH-type transcriptional repressor NanR (260 aa).

One can recognise an HTH gntR-type domain in the interval 27–95 (KKLSDMVEEE…NGERARVSMP (69 aa)). A DNA-binding region (H-T-H motif) is located at residues 55–74 (ERELMEFFNVGRPSVREALA).

Belongs to the NanR family.

Its function is as follows. Transcriptional repressor that controls expression of the genes required for the catabolism of sialic acids. This chain is HTH-type transcriptional repressor NanR, found in Enterobacter sp. (strain 638).